We begin with the raw amino-acid sequence, 253 residues long: Probable transcriptional regulatory protein Tpet_0454 (253 aa).

It belongs to the TACO1 family.

The protein localises to the cytoplasm. This Thermotoga petrophila (strain ATCC BAA-488 / DSM 13995 / JCM 10881 / RKU-1) protein is Probable transcriptional regulatory protein Tpet_0454.